The chain runs to 292 residues: 4'-phosphopantetheinyl transferase 1 (292 aa).

The protein belongs to the P-Pant transferase superfamily.

The enzyme catalyses apo-[ACP] + CoA = holo-[ACP] + adenosine 3',5'-bisphosphate + H(+). Its function is as follows. Transfers the 4'-phosphopantetheine moiety from coenzyme A to a Ser of an acyl-carrier-protein. The enzyme is able to transfer the cofactor to a broad range of enzymes with acyl- or peptidyl-carrier protein domains. Required for primary biological processes such as growth and asexual/sexual development, and activates target enzymes involved in the synthesis of metabolites such as fatty acids, nonribosomal peptides and polyketides such as the gamma-pyrones fusapyrone (FPY) and deoxyfusapyrone (dFPY). The polypeptide is 4'-phosphopantetheinyl transferase 1 (Fusarium mangiferae (Mango malformation disease fungus)).